Consider the following 557-residue polypeptide: Acid-sensing ion channel 1B (557 aa).

Residues 1-98 (MVRITCTISF…SIRQGLWALV (98 aa)) lie on the Cytoplasmic side of the membrane. Residues 36–45 (KDGEQGKYQE) are compositionally biased toward basic and acidic residues. Residues 36–57 (KDGEQGKYQEEGDDPDAYDGPE) form a disordered region. Residues 46 to 57 (EGDDPDAYDGPE) show a composition bias toward acidic residues. A helical membrane pass occupies residues 99–115 (FLLAISMFLLQVVDRVI). Topologically, residues 116 to 460 (YYLQYDYVTL…ETIEQKKAYE (345 aa)) are extracellular. N-linked (GlcNAc...) asparagine glycans are attached at residues Asn133 and Asn194. 7 disulfide bridges follow: Cys142–Cys229, Cys207–Cys214, Cys325–Cys400, Cys343–Cys396, Cys347–Cys394, Cys356–Cys378, and Cys358–Cys370. 2 N-linked (GlcNAc...) asparagine glycosylation sites follow: Asn401 and Asn428. A discontinuously helical transmembrane segment spans residues 461 to 491 (LAGLLGDIGGQMGLFIGASILTILELFDYLY). A GAS motif; ion selectivity filter motif is present at residues 477-479 (GAS). The Cytoplasmic segment spans residues 492-557 (EVIKFKLCRC…GQGNFEDFTC (66 aa)).

This sequence belongs to the amiloride-sensitive sodium channel (TC 1.A.6) family. ASIC1 subfamily. As to quaternary structure, homotrimer. Heterotrimer; with other ASIC proteins producing channel with different properties. Expressed in central nervous system.

Its subcellular location is the cell membrane. It localises to the postsynaptic cell membrane. The protein localises to the cell projection. It is found in the dendrite. The catalysed reaction is Na(+)(in) = Na(+)(out). It catalyses the reaction K(+)(in) = K(+)(out). The enzyme catalyses Li(+)(in) = Li(+)(out). It carries out the reaction Ca(2+)(in) = Ca(2+)(out). Its activity is regulated as follows. Inhibited by the diuretic drug amiloride. Its function is as follows. Forms voltage-independent, pH-gated trimeric sodium channels that act as postsynaptic excitatory receptors in the nervous system, playing a crucial role in regulating synaptic plasticity, learning, and memory. Upon extracellular pH drop this channel elicits transient, fast activating, and completely desensitizing inward currents. Displays high selectivity for sodium ions but can also permit the permeation of other cations. The polypeptide is Acid-sensing ion channel 1B (asic1b) (Danio rerio (Zebrafish)).